The primary structure comprises 325 residues: Bifunctional nuclease 1 (325 aa).

The region spanning 117 to 252 (CVHNNPQGGH…YLAYSDGMRV (136 aa)) is the BFN domain. The 35-residue stretch at 284 to 318 (TKEFNILSKMMQAVDEERYDEAAEWRDKLGQFRAK) folds into the UVR domain.

It belongs to the bifunctional nuclease family.

The protein resides in the nucleus. Its function is as follows. Bifunctional nuclease with both RNase and DNase activities. Involved in basal defense response. Participates in abscisic acid-derived callose deposition following infection by a necrotrophic pathogen. This Arabidopsis thaliana (Mouse-ear cress) protein is Bifunctional nuclease 1 (BBD1).